The primary structure comprises 574 residues: MKRKWEERVKKVEELASYYERNPLPTVYKPRLSKPLQPSRVWKIFCRQADAFRFVKTCKEDVHVFALERNTQNGQRFYLVTTYQELWYYYTKGYKTSLMHCYEVIPEKDACKLYFDLEFYKAANPGADGKDMVAKLIELVSQKLKELYDVNCSARDVLNLDSSTDEKFSRHLIFLPCKTVFKDNIHVGNFVRTILQPAIRLVGSNVAAPIAEGGAGYTSQCSAPTVELDGPLTNLTAVEDASKGWPAIADQRKETETSHHGENSEFSFLIVNNKEGDKQLFVDLGVYTRNRNFRMYKSSKAGKNVILTIAEDNKFVPNCEENVSLEEAYFLSSLVCNVRFEDGTKILSSNFVEEEIKMSAFLRSKTTRSTREPMEGYQESPYPEIDCFVRSLINKDGVQGGIRQWNYFSGEEILVYDISGYRWCENIGRAHRSNNIMILVDLKKEVWYQKCHDPVCREKNFKSQSLPLPSRICLSSLFIEEEDHMVTDERENTEVTSHSNPADLSESSAYLAINTSQDTQWDNASDDAYLVETAEDVELAEAADYSLGYDTEEIPDEVLLEMSWKQDTCSKDDS.

The stretch at 2–22 (KRKWEERVKKVEELASYYERN) forms a coiled coil. Substrate is bound by residues R76, 116-118 (DLE), 167-171 (KFSRH), 291-294 (RNFR), and K300. Mn(2+)-binding residues include D116 and E118. Zn(2+) is bound by residues C424, H431, C451, and C456. The Zinc knuckle motif signature appears at 424-457 (CENIGRAHRSNNIMILVDLKKEVWYQKCHDPVCR).

The protein belongs to the eukaryotic-type primase small subunit family. Mn(2+) serves as cofactor.

It localises to the nucleus. It is found in the mitochondrion matrix. Its subcellular location is the chromosome. It catalyses the reaction ssDNA + n NTP = ssDNA/pppN(pN)n-1 hybrid + (n-1) diphosphate.. It carries out the reaction DNA(n) + a 2'-deoxyribonucleoside 5'-triphosphate = DNA(n+1) + diphosphate. DNA primase and DNA polymerase required to tolerate replication-stalling lesions by bypassing them. Required to facilitate mitochondrial and nuclear replication fork progression by initiating de novo DNA synthesis using dNTPs and acting as an error-prone DNA polymerase able to bypass certain DNA lesions. Shows a high capacity to tolerate DNA damage lesions such as 8oxoG and abasic sites in DNA. Provides different translesion synthesis alternatives when DNA replication is stalled: able to synthesize DNA primers downstream of lesions, such as UV lesions, R-loops and G-quadruplexes, to allow DNA replication to continue. Can also realign primers ahead of 'unreadable lesions' such as abasic sites and 6-4 photoproduct (6-4 pyrimidine-pyrimidinone), thereby skipping the lesion. Repriming avoids fork degradation while leading to accumulation of internal ssDNA gaps behind the forks. Also able to incorporate nucleotides opposite DNA lesions such as 8oxoG, like a regular translesion synthesis DNA polymerase. Also required for reinitiating stalled forks after ultraviolet (UV) damage during nuclear DNA replication. Required for mitochondrial DNA (mtDNA) synthesis and replication, by reinitiating synthesis after UV damage or in the presence of chain-terminating nucleotides. In addition to its role in DNA damage response, also required to maintain efficient nuclear and mitochondrial DNA replication in unperturbed cells. The protein is DNA-directed primase/polymerase protein of Gallus gallus (Chicken).